The chain runs to 3476 residues: MANRRVGRGCWEVSPTERRPPAGLRGPAAEEEASSPPVLSLSHFCRSPFLCFGDVLLGASRTLSLALDNPNEEVAEVKISHFPAADLGFSVSQRCFVLQPKEKIVISVNWTPLKEGRVREIMTFLVNDVLKHQAILLGNAEEQKKKKRSLWDTIKKKKISASTSHNRRVSNIQNVNKTFSVSQKVDRVRSPLQACENLAMNEGGPPTENNSLTLEENKIPISPISPAFNECHGATCLPLSVRRSTTYSSLHASENRELLNVHSANVSKVSFNEKAVTETSFNSVNVNGQSGENSKLSLTPNYSSTLNITQSQIHFLSPDSFVNNSHGANNELELVTCLSSDMFMKDNSKPVHLESTIAHEIYQKILSPDSFIKDNYGLNQDLESESVNPILSPNQFLKDNMAYVCTSQQTCKVPLSNENSQVPQSPEDWRKSEVSPRIPECQGSKSPKAIFEEIVEMKSNYYSFIKQNNPKFSAVQDISSHSHNKQPKRRPILSATVTKRKATCTRENQTEINKPKAKRCLNSAVGEHEKVINNQKEKDFHSYLPIIDPILSKSKSYKNEVAPSSTTASVARKRKSDGSMEDANVRVAVTEHTEVREIKRIHFSPSEPKTSAVKKTKNVITPISKHISNREKLNLKKKTDLSIFRTPISKTNKRTKPIIAVAQSNLTFIKPLKTDIPRHPMPFAAKNMFYDERWKEKQEQGFTWWLNFILTPDDFTVKTNISEVNAATLLLGIENQHKISVPRAPTKEEMSLRAYTARCRLNRLRRAACRLFTSEKMVKAIKKLEIEIEARRLIVRKDRHLWKDVGERQKVLNWLLSYNPLWLRIGLETTYGELISLEDNSDVTGLAMFILNRLLWNPDIAAEYRHPTVPHLYRDGHEEALSKFTLKKLLLLVCFLDYAKISRLIDHDPCLFCKDAEFKASKEILLAFSRDFLSGEGDLSRHLGLLGLPVNHVQTPFDEFDFAVTNLAVDLQCGVRLVRTMELLTQNWDLSKKLRIPAISRLQKMHNVDVVLQVLKSRGIELSDEHGNTILSKDIVDRHREKTLRLLWKIAFAFQVDISLNLDQLKEEIAFLKHTKSIKKTISLLSCHSDDLINKKKGKRDSGSFEQYSENIKLLMDWVNAVCAFYNKKVENFTVSFSDGRVLCYLIHHYHPCYVPFDAICQRTTQTVECTQTGSVVLNSSSESDDSSLDMSLKAFDHENTSELYKELLENEKKNFHLVRSAVRDLGGIPAMINHSDMSNTIPDEKVVITYLSFLCARLLDLRKEIRAARLIQTTWRKYKLKTDLKRHQEREKAARIIQLAVINFLAKQRLRKRVNAALVIQKYWRRVLAQRKLLMLKKEKLEKVQNKAASLIQGYWRRYSTRRRFLKLKYYSIILQSRIRMIIAVTSYKRYLWATVTIQRHWRAYLRRKQDQQRYEMLKSSTLVIQSMFRKWKQRKMQSQVKATVILQRAFREWHLRKHAKEENSAIIIQSWYRMHKELQKYIYIRSCVVIIQKRFRCFQAQKLYKRKKESILTIQKYYKAYLKGKIERTNYLQKRAAAIQLQAAFRRLKAHNLCRQIRAACVIQSYWRMRQDRVRFLNLKKTIIKLQAHVRKHQQRQKYKKMKKAAVIIQTHFRAYIFARKVLASYQKTRSAVIVLQSAYRGMQARKMYVHILTSVIKIQSYYRAHVSKKEFLSLKNATIKLQSIVKMKQTRKQYLHLRAAALFIQQCYRSKKIAAQKREEYMQMRESCIKLQAFVRGYLVRKQMRLQRKAVISLQSYFRMRKARQYYLKMYKAIIVIQNYYHAYKAQVNQRKNFLQVKKAATCLQAAYRGYKVRQLIKQQSIAALKIQSAFRGYNKRVKYQSVLQSIIKIQRWYRAYKTLHDTRTHFLKTKAALISLQSAYRGWKVRKQIRREHQAVLKIQSAFRMAKAQKQFRLFKTAALVIQQNFKAWTAGRKQRMEYIELRHAVLMLQSMWRGKTLRRQLQRQHKCAVIIQSYYRMHVQQKKWKIMKKAALLIQKYYRAYSIGREQNHLYLKTKAAVVTLQSAYRGMKVRKRIKDCNKAAVTIQSKYRAYKTKKKYATYRASAIIIQRWYRGIKITNHQHKEYLNLKKTAIKIQSVYRGIRVRRHIQHMHRAATFIKAVFKMHQSRISYHTMRKAAIVIQVRFRAYYQGKTQREKYLTILKAVKILQASFRGVRVRRTLRKMQIAATLIQSNYRRYRKQTYFNKLKKITKTVQQRYRAMKERNIQFQRYNKLRHSVIYIQAIFRGKKARRHLKMMHIAATLIQRRFRTLMMRRRFLSLKKTAILIQRKYRAHLCTKHHLQFLQVQNAVIKIQSSYRRWMIRKRMREMHRAATFIQATFRMHRLHMRYQTLKQASVVIQQQYQANRAAKLQRQHYLRQRHSAVILQAAFRGMKTRRHLKSMHSSATLIQSRFRSLLVRRRFISLKKATIFVQRKYRATICAKHKLHQFLHLRKAAITIQSSYRRLMVKKKLQEMQRAAILIQATFRMHRTYTTFQTWKHASILIQQHYRTYRAAKLQRENYIRQWHSAVVIQAAYKGMKARHLLREKHKASIIIQSTYRMYRQYCFYQKLQWATKIIQEKYRANKKKQKAFQHNELKKETCVQAGFQDMNIKKQIQEQHQAAIIIQKHCKAFKIRKHYLHLRATVVSIQRRYRKLTAVRTQAVICIQSYYRGFKVRKDIQNMHQAATLIQSFYRMHRAKVDYETKKTAIVVIQNYYRLYVRVKTERKNFLAVQKSVRTIQAAFRGMEVRQKLKNVSEEKVAAIVNQSALCCYRSKTQYEAVQSEGVMIQEWYKASGLACSQEAEYHSQSRAAVTIQKAFCRMATRKLETQKYAALRIQFFLQMAVYRRRFVQQKRAAITLQHYFRTWQTRKQFLLYRKAAVVLQNHYRAFLSAKHQRQVYLQIRSSVIIIQARSKGFIQKRKFQEIKNSTIKIQAMWRRYRAKKYLCKVKAACKIQAWYRCWRAHKEYLAILKAVKIIQGCFYTKLERTRFLNVRASAIIIQRKWRAILSAKIAHEHFLMIKRHRAACLIQAHYRGYKGRQVFLRQKSAALIIQKYIRAREAGKRERIKYIEFKKSTVILQALVRGWLVRKRILEQRAKIRLLHFTAAAYYHLNALRIQRAYKLYLAMKHANKQVNSVICIQRWFRARLQEKRFIQKYHSVKKIEHEGQECLSQRNRAASVIQKAVRHFLLRKKQEKFTSGIIKIQALWRGYSWRKKNDCTKIKAIRLSLQVVNREIREENKLYKRTALALHYLLTYKHLSAILEALKHLEVVTRLSPLCCENMAHSGAISKIFVLIRSCNRSVPCMEVIRYAVQVLLNVSKYEKTTSAVYDVENCIDILLELLQIYREKPGNKVADKGGSIFTKTCCLLAILLKTTNRASDVRSRSKVVDRIYSLYKLTAHKHKMNTERILYKQKKNSSISIPFIPETPVRTRIVSRLKPDWVLRRDNMEEITNPLQAIQMVMDTLGIPY.

Residues 1 to 30 (MANRRVGRGCWEVSPTERRPPAGLRGPAAE) are disordered. Phosphoserine occurs at positions 280, 283, 367, 392, and 425. Disordered stretches follow at residues 416–443 (SNEN…ECQG) and 562–581 (APSS…GSME). Phosphoserine is present on serine 604. One can recognise a Calponin-homology (CH) 1 domain in the interval 919–1055 (KASKEILLAF…LLWKIAFAFQ (137 aa)). The stretch at 1056–1077 (VDISLNLDQLKEEIAFLKHTKS) forms a coiled coil. The residue at position 1102 (serine 1102) is a Phosphoserine. A Calponin-homology (CH) 2 domain is found at 1109-1260 (SENIKLLMDW…YLSFLCARLL (152 aa)). 40 IQ domains span residues 1346–1377 (QNKA…IILQ), 1392–1421 (YLWA…MLKS), 1581–1612 (LKKT…VIIQ), 1604–1633 (MKKA…KTRS), 1631–1660 (TRSA…SVIK), 1654–1683 (ILTS…ATIK), 1727–1756 (MRES…AVIS), 1750–1781 (QRKA…IVIQ), 1800–1829 (VKKA…AALK), 1823–1852 (QSIA…SIIK), 1873–1902 (TKAA…AVLK), 1896–1927 (EHQA…LVIQ), 1946–1977 (LRHA…VIIQ), 1969–2000 (QHKC…LLIQ), 2019–2048 (TKAA…AAVT), 2042–2073 (CNKA…IIIQ), 2092–2123 (LKKT…TFIK), 2115–2146 (MHRA…IVIQ), 2165–2196 (ILKA…TLIQ), 2238–2269 (LRHS…TLIQ), 2261–2292 (MHIA…ILIQ), 2310–2341 (VQNA…TFIQ), 2333–2364 (MHRA…VVIQ), 2383–2414 (QRHS…TLIQ), 2406–2437 (MHSS…IFVQ), 2456–2487 (LRKA…ILIQ), 2479–2510 (MQRA…ILIQ), 2529–2560 (QWHS…IIIQ), 2623–2652 (QHQA…TVVS), 2664–2695 (RTQA…TLIQ), 2687–2718 (MHQA…VVIQ), 2737–2766 (VQKS…EKVA), 2858–2889 (QKRA…VVLQ), 2908–2937 (IRSS…STIK), 2931–2962 (IKNS…KIQA), 2953–2984 (KVKA…KIIQ), 3028–3059 (RHRA…LIIQ), 3078–3109 (FKKS…RLLH), 3180–3209 (RNRA…GIIK), and 3203–3234 (FTSG…IRLS).

It is found in the cytoplasm. It localises to the cytoskeleton. The protein localises to the spindle. Its subcellular location is the nucleus. Its function is as follows. Probable role in mitotic spindle regulation and coordination of mitotic processes. May have a preferential role in regulating neurogenesis. The chain is Abnormal spindle-like microcephaly-associated protein homolog (ASPM) from Gorilla gorilla gorilla (Western lowland gorilla).